The primary structure comprises 247 residues: TM2 domain-containing protein 3 (247 aa).

A signal peptide spans 1 to 25 (MIPMMTLKRVCRVLLFITQMYVLSG). Topologically, residues 26 to 179 (RGFLSFEYSE…RTFPKMLYCN (154 aa)) are extracellular. 6 N-linked (GlcNAc...) asparagine glycosylation sites follow: Asn-87, Asn-99, Asn-139, Asn-155, Asn-169, and Asn-179. The chain crosses the membrane as a helical span at residues 180–200 (WTGGYKWSTALALSITLGGFG). The region spanning 183–231 (GYKWSTALALSITLGGFGADRFYLGQWREGLGKLFSFGGLGIWTLIDVF) is the TM2 domain. Residues 201 to 215 (ADRFYLGQWREGLGK) are Cytoplasmic-facing. Residues 216–236 (LFSFGGLGIWTLIDVFLISVG) form a helical membrane-spanning segment. At 237-247 (YVGPADGSLYI) the chain is on the extracellular side.

This sequence belongs to the TM2 family.

Its subcellular location is the membrane. The polypeptide is TM2 domain-containing protein 3 (tm2d3) (Xenopus tropicalis (Western clawed frog)).